We begin with the raw amino-acid sequence, 150 residues long: Deoxyuridine 5'-triphosphate nucleotidohydrolase (150 aa).

Substrate contacts are provided by residues 69-71 (RSG), Asn-82, and 86-88 (LID).

This sequence belongs to the dUTPase family. It depends on Mg(2+) as a cofactor.

It catalyses the reaction dUTP + H2O = dUMP + diphosphate + H(+). It functions in the pathway pyrimidine metabolism; dUMP biosynthesis; dUMP from dCTP (dUTP route): step 2/2. In terms of biological role, this enzyme is involved in nucleotide metabolism: it produces dUMP, the immediate precursor of thymidine nucleotides and it decreases the intracellular concentration of dUTP so that uracil cannot be incorporated into DNA. In Chromobacterium violaceum (strain ATCC 12472 / DSM 30191 / JCM 1249 / CCUG 213 / NBRC 12614 / NCIMB 9131 / NCTC 9757 / MK), this protein is Deoxyuridine 5'-triphosphate nucleotidohydrolase.